We begin with the raw amino-acid sequence, 123 residues long: Ribonuclease P protein component 2 (123 aa).

This sequence belongs to the eukaryotic/archaeal RNase P protein component 2 family. Consists of a catalytic RNA component and at least 4-5 protein subunits.

It localises to the cytoplasm. It carries out the reaction Endonucleolytic cleavage of RNA, removing 5'-extranucleotides from tRNA precursor.. In terms of biological role, part of ribonuclease P, a protein complex that generates mature tRNA molecules by cleaving their 5'-ends. This chain is Ribonuclease P protein component 2, found in Sulfurisphaera tokodaii (strain DSM 16993 / JCM 10545 / NBRC 100140 / 7) (Sulfolobus tokodaii).